Reading from the N-terminus, the 431-residue chain is Beta-lactamase hydrolase-like protein (431 aa).

Positions 212, 214, and 286 each coordinate Zn(2+). Asp309 serves as a coordination point for substrate.

Belongs to the metallo-beta-lactamase superfamily. Zn(2+) is required as a cofactor.

Its function is as follows. Could play a role in cell adherence or biofilm development. The sequence is that of Beta-lactamase hydrolase-like protein from Xylella fastidiosa (strain 9a5c).